A 167-amino-acid chain; its full sequence is Thioredoxin Y2, chloroplastic (167 aa).

The N-terminal 58 residues, 1–58, are a transit peptide targeting the chloroplast; it reads MAISLATAYISPCFTPESSNSASPSRTLSSVRLPSQIRRFGSVQSPSSSTRFAPLTVR. In terms of domain architecture, Thioredoxin spans 59–164; sequence AAKKQTFNSF…LVERIENSLQ (106 aa). Catalysis depends on nucleophile residues cysteine 88 and cysteine 91. A disulfide bond links cysteine 88 and cysteine 91.

The protein belongs to the thioredoxin family. Plant Y-type subfamily. In terms of tissue distribution, expressed in leaves.

The protein resides in the plastid. It is found in the chloroplast stroma. Thiol-disulfide oxidoreductase that poorly activates chloroplastic malate dehydrogenase (NADP-MDH) and fructose-1,6-bisphosphatase. Provides reducing equivalents for peroxiredoxin Q. In Arabidopsis thaliana (Mouse-ear cress), this protein is Thioredoxin Y2, chloroplastic.